A 724-amino-acid polypeptide reads, in one-letter code: Ribosomal RNA processing protein 1 homolog B (724 aa).

The interval 331-576 (NGAPLSSAED…SKKKKKTMKL (246 aa)) is disordered. Serine 336 and serine 370 each carry phosphoserine. Residues 373–386 (HIHKKKRKKRKRSH) are compositionally biased toward basic residues. Phosphoserine occurs at positions 432 and 438. Residues 448 to 461 (HNKRKRPRKKKLRA) are compositionally biased toward basic residues. The segment covering 483 to 496 (SGHSQSSAAHISSS) has biased composition (low complexity). At serine 494 the chain carries Phosphoserine. Composition is skewed to polar residues over residues 513–528 (DSSS…TPTS) and 548–564 (KTAS…SQKP). The residue at position 618 (lysine 618) is an N6-acetyllysine. The segment at 625-649 (AKNSSATRPQGPAGQLNKTPSSSKK) is disordered. A compositionally biased stretch (polar residues) spans 640–649 (LNKTPSSSKK). Phosphoserine occurs at positions 668 and 672. Arginine 678 carries the post-translational modification Citrulline. A disordered region spans residues 687–724 (PLHGVLKTATSSPASTPLSPMRLPATTPKRRPRAADFF). Phosphothreonine is present on threonine 694. Low complexity predominate over residues 694–706 (TATSSPASTPLSP). A phosphoserine mark is found at serine 698 and serine 701.

This sequence belongs to the RRP1 family. As to quaternary structure, interacts with the transcriptional activator E2F1. Interacts with serine/threonine-protein phosphatase PP1 subunits PPP1CB and PPP1CC but not with PPP1CA. Interacts with 60S ribosomal proteins RPL5 and RPL27, ribosomal processing protein RRP1/NNP1 and other nucleolar proteins including NOP2/NOL1 and FBL. Also interacts with nucleolar protein NPM1/B23. Interacts with splicing factor SRSF1 and LUC7L3/CROP. Interacts with GTPase activator SIPA1. Interacts with H1-10, NCL, PARP1, TRIM28 and YBX3. Citrullinated by PADI4.

Its subcellular location is the nucleus. It localises to the nucleolus. The protein resides in the nucleoplasm. It is found in the chromosome. Positively regulates DNA damage-induced apoptosis by acting as a transcriptional coactivator of proapoptotic target genes of the transcriptional activator E2F1. Likely to play a role in ribosome biogenesis by targeting serine/threonine protein phosphatase PP1 to the nucleolus. Involved in regulation of mRNA splicing. Inhibits SIPA1 GTPase activity. Involved in regulating expression of extracellular matrix genes. Associates with chromatin and may play a role in modulating chromatin structure. The protein is Ribosomal RNA processing protein 1 homolog B (Rrp1b) of Mus musculus (Mouse).